The sequence spans 122 residues: Large ribosomal subunit protein uL14 (122 aa).

It belongs to the universal ribosomal protein uL14 family. Part of the 50S ribosomal subunit. Forms a cluster with proteins L3 and L19. In the 70S ribosome, L14 and L19 interact and together make contacts with the 16S rRNA in bridges B5 and B8.

Binds to 23S rRNA. Forms part of two intersubunit bridges in the 70S ribosome. This chain is Large ribosomal subunit protein uL14, found in Campylobacter jejuni subsp. jejuni serotype O:6 (strain 81116 / NCTC 11828).